A 1997-amino-acid polypeptide reads, in one-letter code: MALLIHLKTVSELRGRGDRIAKVTFRGQSFYSRVLENCEDVADFDETFRWPVASSIDRNEMLEIQVFNYSKVFSNKLIGTFRMVLQKVVEESHVEVTDTLIDDNNAIIKTSLCVEVRYQATDGTVGSWDDGDFLGDESLQEEEKDSQETDGLLPGSRPSSRPPGEKSFRRAGRSVFSAMKLGKNRSHKEEPQRPDEPAVLEMEDLDHLAIRLGDGLDPDSVSLASVTALTTNVSNKRSKPDIKMEPSAGRPMDYQVSITVIEARQLVGLNMDPVVCVEVGDDKKYTSMKESTNCPYYNEYFVFDFHVSPDVMFDKIIKISVIHSKNLLRSGTLVGSFKMDVGTVYSQPEHQFHHKWAILSDPDDISSGLKGYVKCDVAVVGKGDNIKTPHKANETDEDDIEGNLLLPEGVPPERQWARFYVKIYRAEGLPRMNTSLMANVKKAFIGENKDLVDPYVQVFFAGQKGKTSVQKSSYEPLWNEQVVFTDLFPPLCKRMKVQIRDSDKVNDVAIGTHFIDLRKISNDGDKGFLPTLGPAWVNMYGSTRNYTLLDEHQDLNEGLGEGVSFRARLLLGLAVEIVDTSNPELTSSTEVQVEQATPISESCAGKMEEFFLFGAFLEASMIDRRNGDKPITFEVTIGNYGNEVDGLSRPQRPRPRKEPGDEEEVDLIQNASDDEAGDAGDLASVSSTPPMRPQVTDRNYFHLPYLERKPCIYIKSWWPDQRRRLYNANIMDHIADKLEEGLNDIQEMIKTEKSYPERRLRGVLEELSCGCCRFLSLADKDQGHSSRTRLDRERLKSCMRELENMGQQARMLRAQVKRHTVRDKLRLCQNFLQKLRFLADEPQHSIPDIFIWMMSNNKRVAYARVPSKDLLFSIVEEETGKDCAKVKTLFLKLPGKRGFGSAGWTVQAKVELYLWLGLSKQRKEFLCGLPCGFQEVKAAQGLGLHAFPPVSLVYTKKQAFQLRAHMYQARSLFAADSSGLSDPFARVFFINQSQCTEVLNETLCPTWDQMLVFDNLELYGEAHELRDDPPIIVIEIYDQDSMGKADFMGRTFAKPLVKMADEAYCPPRFPPQLEYYQIYRGNATAGDLLAAFELLQIGPAGKADLPPINGPVDVDRGPIMPVPMGIRPVLSKYRVEVLFWGLRDLKRVNLAQVDRPRVDIECAGKGVQSSLIHNYKKNPNFNTLVKWFEVDLPENELLHPPLNIRVVDCRAFGRYTLVGSHAVSSLRRFIYRPPDRSAPSWNTTVRLLRRCRVLCNGGSSSHSTGEVVVTMEPEVPIKKLETMVKLDATSEAVVKVDVAEEEKEKKKKKKGTAEEPEEEEPDESMLDWWSKYFASIDTMKEQLRQQEPSGIDLEEKEEVDNTEGLKGSMKGKEKARAAKEEKKKKTQSSGSGQGSEAPEKKKPKIDELKVYPKELESEFDNFEDWLHTFNLLRGKTGDDEDGSTEEERIVGRFKGSLCVYKVPLPEDVSREAGYDSTYGMFQGIPSNDPINVLVRVYVVRATDLHPADINGKADPYIAIRLGKTDIRDKENYISKQLNPVFGKSFDIEASFPMESMLTVAVYDWDLVGTDDLIGETKIDLENRFYSKHRATCGIAQTYSTHGYNIWRDPMKPSQILTRLCKDGKVDGPHFGPPGRVKVANRVFTGPSEIEDENGQRKPTDEHVALLALRHWEDIPRAGCRLVPEHVETRPLLNPDKPGIEQGRLELWVDMFPMDMPAPGTPLDISPRKPKKYELRVIIWNTDEVVLEDDDFFTGEKSSDIFVRGWLKGQQEDKQDTDVHYHSLTGEGNFNWRYLFPFDYLAAEEKIVISKKESMFSWDETEYKIPARLTLQIWDADHFSADDFLGAIELDLNRFPRGAKTAKQCTMEMATGEVDVPLVSIFKQKRVKGWWPLLARNENDEFELTGKVEAELHLLTAEEAEKNPVGLARNEPDPLEKPNRPDTSFIWFLNPLKSARYFLWHTYRWLLLKLLLLLLLLLLLALFLYSVPGYLVKKILGA.

The 98-residue stretch at 1–98 (MALLIHLKTV…VEESHVEVTD (98 aa)) folds into the C2 1 domain. Residues 1 to 1963 (MALLIHLKTV…ARYFLWHTYR (1963 aa)) lie on the Cytoplasmic side of the membrane. The interval 128 to 171 (WDDGDFLGDESLQEEEKDSQETDGLLPGSRPSSRPPGEKSFRRA) is disordered. A compositionally biased stretch (acidic residues) spans 129 to 145 (DDGDFLGDESLQEEEKD). C2 domains follow at residues 236–357 (KRSK…HKWA) and 400–531 (IEGN…FLPT). The segment at 642–694 (NEVDGLSRPQRPRPRKEPGDEEEVDLIQNASDDEAGDAGDLASVSSTPPMRPQ) is disordered. The span at 660-678 (GDEEEVDLIQNASDDEAGD) shows a compositional bias: acidic residues. The stretch at 792-821 (RERLKSCMRELENMGQQARMLRAQVKRHTV) forms a coiled coil. 2 C2 domains span residues 944–1069 (LHAF…PPRF) and 1115–1242 (DRGP…PSWN). 5 residues coordinate Ca(2+): Asp-976, Asp-982, Asp-1038, Asp-1040, and Asp-1046. Disordered regions lie at residues 1299 to 1324 (AEEEKEKKKKKKGTAEEPEEEEPDES) and 1343 to 1405 (LRQQ…KPKI). 2 stretches are compositionally biased toward acidic residues: residues 1314–1324 (EEPEEEEPDES) and 1352–1361 (DLEEKEEVDN). The span at 1370 to 1383 (KGKEKARAAKEEKK) shows a compositional bias: basic and acidic residues. Over residues 1387–1396 (QSSGSGQGSE) the composition is skewed to low complexity. 2 consecutive C2 domains span residues 1464–1593 (LPED…ATCG) and 1714–1865 (DMPA…KQCT). The Ca(2+) site is built by Asp-1508, Asp-1514, Asp-1563, Asp-1565, Asp-1571, Asp-1836, Ser-1839, and Asp-1842. The chain crosses the membrane as a helical span at residues 1964–1984 (WLLLKLLLLLLLLLLLALFLY). The Extracellular segment spans residues 1985 to 1997 (SVPGYLVKKILGA).

This sequence belongs to the ferlin family. As to quaternary structure, interacts with SNAP2; the interaction is direct. Interacts with STX1; the interaction is direct. Interacts with RAB8B. The cofactor is Ca(2+). Isoform 1 and isoform 3 are found in adult brain. Isoform 2 is expressed in the fetus and in adult brain, heart, placenta, skeletal muscle and kidney.

It localises to the cytoplasmic vesicle. Its subcellular location is the secretory vesicle. The protein localises to the synaptic vesicle membrane. The protein resides in the basolateral cell membrane. It is found in the endoplasmic reticulum membrane. It localises to the golgi apparatus membrane. Its subcellular location is the presynaptic cell membrane. The protein localises to the cell membrane. Key calcium ion sensor involved in the Ca(2+)-triggered synaptic vesicle-plasma membrane fusion and in the control of neurotransmitter release at these output synapses. Interacts in a calcium-dependent manner to the presynaptic SNARE proteins at ribbon synapses of cochlear inner hair cells (IHCs) to trigger exocytosis of neurotransmitter. Also essential to synaptic exocytosis in immature outer hair cells (OHCs). May also play a role within the recycling of endosomes. In Homo sapiens (Human), this protein is Otoferlin (OTOF).